Here is a 148-residue protein sequence, read N- to C-terminus: Putative nickel-responsive regulator (148 aa).

4 residues coordinate Ni(2+): His88, His99, His101, and Cys107.

The protein belongs to the transcriptional regulatory CopG/NikR family. Ni(2+) is required as a cofactor.

Transcriptional regulator. This is Putative nickel-responsive regulator from Helicobacter acinonychis (strain Sheeba).